Reading from the N-terminus, the 195-residue chain is Imidazoleglycerol-phosphate dehydratase (195 aa).

The protein belongs to the imidazoleglycerol-phosphate dehydratase family.

The protein resides in the cytoplasm. It carries out the reaction D-erythro-1-(imidazol-4-yl)glycerol 3-phosphate = 3-(imidazol-4-yl)-2-oxopropyl phosphate + H2O. It participates in amino-acid biosynthesis; L-histidine biosynthesis; L-histidine from 5-phospho-alpha-D-ribose 1-diphosphate: step 6/9. This chain is Imidazoleglycerol-phosphate dehydratase, found in Pelobacter propionicus (strain DSM 2379 / NBRC 103807 / OttBd1).